The sequence spans 665 residues: Probable potassium transport system protein Kup (665 aa).

Transmembrane regions (helical) follow at residues 15–35, 48–68, 100–120, 147–167, 173–193, 219–239, 251–271, 292–312, 348–368, 378–398, 403–423, and 431–451; these read SFLI…LYVM, ITPD…TLLT, WLII…MLTP, IIII…HFGT, IFGP…IVNL, LGFF…ALYS, LTWP…AAWI, MMPS…AIIA, IYMP…VLYF, YGLS…NYLL, PLPI…SFLI, and KGGF…YIWI.

The protein belongs to the HAK/KUP transporter (TC 2.A.72) family.

Its subcellular location is the cell membrane. It catalyses the reaction K(+)(in) + H(+)(in) = K(+)(out) + H(+)(out). In terms of biological role, transport of potassium into the cell. Likely operates as a K(+):H(+) symporter. In Clostridium perfringens (strain ATCC 13124 / DSM 756 / JCM 1290 / NCIMB 6125 / NCTC 8237 / Type A), this protein is Probable potassium transport system protein Kup.